Reading from the N-terminus, the 913-residue chain is Zinc finger protein 112 (913 aa).

The KRAB domain maps to 8 to 79 (VTFKDVAVVF…ETETPRDGCS (72 aa)). Lys256 participates in a covalent cross-link: Glycyl lysine isopeptide (Lys-Gly) (interchain with G-Cter in SUMO2). The segment at 258–280 (YPCTGYRKAFSNDSSSEVHQQFH) adopts a C2H2-type 1; degenerate zinc-finger fold. The segment at 443-465 (YNSEECGNGFSLASHFQDLQIVH) adopts a C2H2-type 2; degenerate zinc-finger fold. The C2H2-type 3; degenerate zinc-finger motif lies at 471 to 493 (YKRYVCSNSFSHNLYLQGHPKIH). The C2H2-type 4; degenerate zinc-finger motif lies at 497 to 519 (KPRKEHGNGFNWSSKLKDHQRVH). 13 C2H2-type zinc fingers span residues 525-547 (YKCNICGKGFNHRSVLNVHQRVH), 553-575 (YKCEECDKGFSRSSYLQAHQRVH), 581-603 (YKCEECGKGFSRNSYLQGHQRVH), 609-631 (YKCEECGKGFSRSSHLQGHQRVH), 637-659 (FKCEECGKGFSWSFNLQIHQRVH), 665-687 (YKCEECGKGFSKASTLLAHQRVH), 693-715 (YQCDECGKSFSQRSYLQSHQSVH), 721-743 (YICEVCGKGFSQRAYLQGHQRVH), 749-771 (YKCEMCGKGFSQSSRLEAHRRVH), 777-799 (YKCEVCTKGFSESSRLQAHQRVH), 805-827 (YKCEQCGKGFSGYSSLQAHHRVH), 833-855 (YKCEVCGKGFSQRSNLQAHQRVH), and 861-883 (YKCDACGKGFRWSSGLLIHQRVH). Lys890 participates in a covalent cross-link: Glycyl lysine isopeptide (Lys-Gly) (interchain with G-Cter in SUMO2).

Belongs to the krueppel C2H2-type zinc-finger protein family.

The protein resides in the nucleus. May be involved in transcriptional regulation. This Homo sapiens (Human) protein is Zinc finger protein 112 (ZNF112).